Reading from the N-terminus, the 414-residue chain is Glucose-1-phosphate adenylyltransferase (414 aa).

Alpha-D-glucose 1-phosphate is bound by residues glycine 164, 181 to 182 (EK), and serine 199.

This sequence belongs to the bacterial/plant glucose-1-phosphate adenylyltransferase family. Homotetramer.

The enzyme catalyses alpha-D-glucose 1-phosphate + ATP + H(+) = ADP-alpha-D-glucose + diphosphate. Its pathway is glycan biosynthesis; glycogen biosynthesis. Its function is as follows. Involved in the biosynthesis of ADP-glucose, a building block required for the elongation reactions to produce glycogen. Catalyzes the reaction between ATP and alpha-D-glucose 1-phosphate (G1P) to produce pyrophosphate and ADP-Glc. The polypeptide is Glucose-1-phosphate adenylyltransferase (Leifsonia xyli subsp. xyli (strain CTCB07)).